The sequence spans 798 residues: Disintegrin and metalloproteinase domain-containing protein B (798 aa).

Positions 1–23 (MKAFSCLLAVIATAASLFQHVDA) are cleaved as a signal peptide. The Extracellular segment spans residues 24–706 (SHARDKLNNI…VSDWVSRHKP (683 aa)). N-linked (GlcNAc...) asparagine glycans are attached at residues asparagine 32, asparagine 226, asparagine 227, asparagine 313, and asparagine 407. The 240-residue stretch at 271–510 (KVALIGVVAD…RTILTNCLTT (240 aa)) folds into the Peptidase M12B domain. 3 cysteine pairs are disulfide-bonded: cysteine 395/cysteine 495, cysteine 448/cysteine 459, and cysteine 580/cysteine 600. Histidine 431 contacts Zn(2+). Residue glutamate 432 is part of the active site. Zn(2+) is bound by residues histidine 435 and histidine 441. Residues 519–608 (GQQCGNGIVE…DCPHDIHSKD (90 aa)) enclose the Disintegrin domain. Residues 707 to 727 (IVIGVAVGAGCLLLLAIASCI) form a helical membrane-spanning segment. The Cytoplasmic segment spans residues 728–798 (CGRSRRQRPR…PGHMPPTRYA (71 aa)). The tract at residues 734–798 (QRPRNRKMPP…PGHMPPTRYA (65 aa)) is disordered. The span at 775–792 (NNIPPPINAPPPAYPGHM) shows a compositional bias: pro residues.

The cofactor is Zn(2+).

The protein localises to the membrane. In terms of biological role, probable zinc protease. This Trichophyton verrucosum (strain HKI 0517) protein is Disintegrin and metalloproteinase domain-containing protein B (ADM-B).